Here is a 93-residue protein sequence, read N- to C-terminus: MSLQPDTLLELSPLLRMQWEEAQQRYVILYPEGMIELNETAAAILELCDGQHNLTSIVDKLERKYDASGIEPDVREMLESALNNGWIREIIAY.

It belongs to the PqqD family. As to quaternary structure, monomer. Interacts with PqqE.

Its pathway is cofactor biosynthesis; pyrroloquinoline quinone biosynthesis. Functions as a PqqA binding protein and presents PqqA to PqqE, in the pyrroloquinoline quinone (PQQ) biosynthetic pathway. This chain is PqqA binding protein, found in Methylococcus capsulatus (strain ATCC 33009 / NCIMB 11132 / Bath).